A 184-amino-acid polypeptide reads, in one-letter code: Ribosome-recycling factor (184 aa).

Belongs to the RRF family.

It is found in the cytoplasm. In terms of biological role, responsible for the release of ribosomes from messenger RNA at the termination of protein biosynthesis. May increase the efficiency of translation by recycling ribosomes from one round of translation to another. The polypeptide is Ribosome-recycling factor (Lachnoclostridium phytofermentans (strain ATCC 700394 / DSM 18823 / ISDg) (Clostridium phytofermentans)).